The following is a 600-amino-acid chain: Gamma-terpinene synthase, chloroplastic (600 aa).

Residues 1–40 (MALNLLSSLPAACNFTRLSLPLSSKVNGFVPPITQVQYPM) constitute a chloroplast transit peptide. Mg(2+)-binding residues include Asp-353, Asp-357, Asp-498, and Glu-506. Positions 353-357 (DDVYD) match the DDXXD motif motif.

It belongs to the terpene synthase family. The cofactor is Mn(2+). Mg(2+) serves as cofactor.

The protein resides in the plastid. It localises to the chloroplast. The enzyme catalyses (2E)-geranyl diphosphate = gamma-terpinene + diphosphate. Its pathway is secondary metabolite biosynthesis; terpenoid biosynthesis. With respect to regulation, inhibited by 100 mM KCl. In terms of biological role, monoterpene synthase which catalyzes the conversion of geranyl diphosphate to gamma-terpinene and the minor products limonene, alpha-pinene, beta-pinene, alpha-terpinolene, alpha-thujene, alpha-terpinene, myrcene and sabinene. The sequence is that of Gamma-terpinene synthase, chloroplastic from Citrus limon (Lemon).